Reading from the N-terminus, the 358-residue chain is Psilocybin cluster transcription regulator (358 aa).

Disordered stretches follow at residues 1–40 and 62–212; these read MAPA…IAGM and SGGK…RRRR. Over residues 18 to 29 the composition is skewed to pro residues; the sequence is PPAPGAPAPANA. A compositionally biased stretch (polar residues) spans 79–91; it reads QTLSNLAQAQPYG. The segment covering 179–190 has biased composition (low complexity); that stretch reads PTTGRRGGRSAT. Residues 195-209 show a composition bias toward basic and acidic residues; sequence EWSRQRKDNHKEVER. The tract at residues 199-212 is basic motif; that stretch reads QRKDNHKEVERRRR. Residues 199–249 enclose the bHLH domain; the sequence is QRKDNHKEVERRRRGNINEGINELGRIVPSGSGEKAKGAILSRAVQYIHHL. The helix-loop-helix motif stretch occupies residues 213 to 249; it reads GNINEGINELGRIVPSGSGEKAKGAILSRAVQYIHHL. A coiled-coil region spans residues 264 to 306; it reads KLLMDQAMGDLQAQLEEVKRLWEEERMARTRLEAELEVLRNMN. The interval 308–358 is disordered; sequence VNAGSAPASKDESAAGTKRRSTDGAEAATAATESSTANAEGERDGKRQRTE. Low complexity predominate over residues 331–346; sequence GAEAATAATESSTANA. The span at 347–358 shows a compositional bias: basic and acidic residues; the sequence is EGERDGKRQRTE.

The protein resides in the nucleus. Functionally, transcription factor that may regulate the expression of the gene cluster that mediates the biosynthesis of psilocybin, a psychotropic tryptamine-derived natural product. The polypeptide is Psilocybin cluster transcription regulator (Psilocybe cubensis (Psychedelic mushroom)).